We begin with the raw amino-acid sequence, 106 residues long: Iron-sulfur cluster assembly protein CyaY (106 aa).

The protein belongs to the frataxin family.

Functionally, involved in iron-sulfur (Fe-S) cluster assembly. May act as a regulator of Fe-S biogenesis. This Cronobacter sakazakii (strain ATCC BAA-894) (Enterobacter sakazakii) protein is Iron-sulfur cluster assembly protein CyaY.